Here is a 246-residue protein sequence, read N- to C-terminus: Large ribosomal subunit protein uL3 (246 aa).

Disordered stretches follow at residues 140 to 162 and 215 to 246; these read SHRSIGSTGGRQDPGKTFKNKKM and DVPLPGKFRENGSAGASQVEAAPEAPASEENA. The residue at position 151 (Q151) is an N5-methylglutamine. Positions 234–246 are enriched in low complexity; that stretch reads EAAPEAPASEENA.

The protein belongs to the universal ribosomal protein uL3 family. As to quaternary structure, part of the 50S ribosomal subunit. Forms a cluster with proteins L14 and L19. Post-translationally, methylated by PrmB.

Its function is as follows. One of the primary rRNA binding proteins, it binds directly near the 3'-end of the 23S rRNA, where it nucleates assembly of the 50S subunit. This is Large ribosomal subunit protein uL3 from Methylorubrum populi (strain ATCC BAA-705 / NCIMB 13946 / BJ001) (Methylobacterium populi).